The chain runs to 569 residues: Urease subunit alpha (569 aa).

Residues 131-569 (GGIDTHIHFI…LPLAQRYLLL (439 aa)) enclose the Urease domain. Residues H136, H138, and K219 each coordinate Ni(2+). K219 carries the N6-carboxylysine modification. Residue H221 coordinates substrate. Positions 248 and 274 each coordinate Ni(2+). H322 serves as the catalytic Proton donor. D362 provides a ligand contact to Ni(2+).

It belongs to the metallo-dependent hydrolases superfamily. Urease alpha subunit family. As to quaternary structure, heterotrimer of UreA (gamma), UreB (beta) and UreC (alpha) subunits. Three heterotrimers associate to form the active enzyme. Requires Ni cation as cofactor. In terms of processing, carboxylation allows a single lysine to coordinate two nickel ions.

It is found in the cytoplasm. It catalyses the reaction urea + 2 H2O + H(+) = hydrogencarbonate + 2 NH4(+). The protein operates within nitrogen metabolism; urea degradation; CO(2) and NH(3) from urea (urease route): step 1/1. The protein is Urease subunit alpha of Synechococcus sp. (strain CC9605).